The primary structure comprises 285 residues: ATP phosphoribosyltransferase (285 aa).

This sequence belongs to the ATP phosphoribosyltransferase family. Long subfamily. Requires Mg(2+) as cofactor.

The protein resides in the cytoplasm. The enzyme catalyses 1-(5-phospho-beta-D-ribosyl)-ATP + diphosphate = 5-phospho-alpha-D-ribose 1-diphosphate + ATP. The protein operates within amino-acid biosynthesis; L-histidine biosynthesis; L-histidine from 5-phospho-alpha-D-ribose 1-diphosphate: step 1/9. With respect to regulation, feedback inhibited by histidine. In terms of biological role, catalyzes the condensation of ATP and 5-phosphoribose 1-diphosphate to form N'-(5'-phosphoribosyl)-ATP (PR-ATP). Has a crucial role in the pathway because the rate of histidine biosynthesis seems to be controlled primarily by regulation of HisG enzymatic activity. The protein is ATP phosphoribosyltransferase of Streptomyces avermitilis (strain ATCC 31267 / DSM 46492 / JCM 5070 / NBRC 14893 / NCIMB 12804 / NRRL 8165 / MA-4680).